Here is a 316-residue protein sequence, read N- to C-terminus: GTP cyclohydrolase FolE2 1 (316 aa).

The protein belongs to the GTP cyclohydrolase IV family.

The enzyme catalyses GTP + H2O = 7,8-dihydroneopterin 3'-triphosphate + formate + H(+). The protein operates within cofactor biosynthesis; 7,8-dihydroneopterin triphosphate biosynthesis; 7,8-dihydroneopterin triphosphate from GTP: step 1/1. In terms of biological role, converts GTP to 7,8-dihydroneopterin triphosphate. The protein is GTP cyclohydrolase FolE2 1 of Burkholderia orbicola (strain AU 1054).